We begin with the raw amino-acid sequence, 265 residues long: PBSX phage terminase small subunit (265 aa).

Positions 241–265 are disordered; that stretch reads KQKAEKTDDSQEPIEIMIKRKERKS.

To B.subtilis YqaS and B.subtilis phage SPP1 terminase small subunit. Dimer of a small and a large subunit.

In terms of biological role, functions as a terminase. The sequence is that of PBSX phage terminase small subunit (xtmA) from Bacillus subtilis (strain 168).